We begin with the raw amino-acid sequence, 501 residues long: uncharacterized protein (501 aa).

A run of 7 helical transmembrane segments spans residues 14–34 (AIFIIPFWILSIALWFSSGSV), 73–93 (FILFQIIPINILCFLPLLGYM), 111–131 (IFGIMMLITIPLFLIVSICIF), 197–217 (FIIATIVFSFSMLVIVLVLLI), 274–294 (ILLSIFQLFYIGSYFSLYYFG), 297–317 (FNLIPFFINLIILFISYYNLI), and 466–486 (FLVLIGLSGLFNILYLKRLIL).

The protein resides in the membrane. This is an uncharacterized protein from Dictyostelium discoideum (Social amoeba).